Reading from the N-terminus, the 300-residue chain is tRNA dimethylallyltransferase (300 aa).

9–16 (GPTASGKT) serves as a coordination point for ATP. A substrate-binding site is contributed by 11–16 (TASGKT). The interaction with substrate tRNA stretch occupies residues 34–37 (DSQQ).

This sequence belongs to the IPP transferase family. Monomer. Requires Mg(2+) as cofactor.

It catalyses the reaction adenosine(37) in tRNA + dimethylallyl diphosphate = N(6)-dimethylallyladenosine(37) in tRNA + diphosphate. Functionally, catalyzes the transfer of a dimethylallyl group onto the adenine at position 37 in tRNAs that read codons beginning with uridine, leading to the formation of N6-(dimethylallyl)adenosine (i(6)A). This chain is tRNA dimethylallyltransferase, found in Anaeromyxobacter sp. (strain Fw109-5).